The chain runs to 466 residues: 3-isopropylmalate dehydratase large subunit (466 aa).

The [4Fe-4S] cluster site is built by Cys-347, Cys-407, and Cys-410.

Belongs to the aconitase/IPM isomerase family. LeuC type 1 subfamily. In terms of assembly, heterodimer of LeuC and LeuD. Requires [4Fe-4S] cluster as cofactor.

It catalyses the reaction (2R,3S)-3-isopropylmalate = (2S)-2-isopropylmalate. It participates in amino-acid biosynthesis; L-leucine biosynthesis; L-leucine from 3-methyl-2-oxobutanoate: step 2/4. In terms of biological role, catalyzes the isomerization between 2-isopropylmalate and 3-isopropylmalate, via the formation of 2-isopropylmaleate. In Buchnera aphidicola subsp. Diuraphis noxia, this protein is 3-isopropylmalate dehydratase large subunit.